Consider the following 1323-residue polypeptide: MRYPPSIGSILLIIPIFLTFFGNSNAQLWKRCVSPQDCLCSGTTNGISRYGTGNILEDLETMYRGCRRVYGNLEITWIEANEIKKWRESTNSTVDPKNEDSPLKSINFFDNLEEIRGSLIIYRANIQKISFPRLRVIYGDEVFHDNALYIHKNDKVHEVVMRELRVIRNGSVTIQDNPKMCYIGDKIDWKELLYDPDVQKVETTNSHQHCYQNGKSMAKCHESCNDKCWGSGDNDCQRVYRSVCPKSCSQCFYSNSTSSYECCDSACLGGCTGHGPKNCIACSKYELDGICIETCPSRKIFNHKTGRLVFNPDGRYQNGNHCVKECPPELLIENDVCVRHCSDGHHYDATKDVRECEKCRSSSCPKICTVDGHLTNETLKNLEGCEQIDGHLIIEHAFTYEQLKVLETVKIVSEYITIVQQNFYDLKFLKNLQIIEGRKLHNVRWALAIYQCDDLEELSLNSLKLIKTGAVLIMKNHRLCYVSKIDWSSIITSKGKDNKPSLAIAENRDSKLCETEQRVCDKNCNKRGCWGKEPEDCLECKTWKSVGTCVEKCDTKGFLRNQTSMKCERCSPECETCNGLGELDCLTCRHKTLYNSDFGNRMECVHDCPVSHFPTQKNVCEKCHPTCYDNGCTGPDSNLGYGGCKQCKYAVKYENDTIFCLQSSGMNNVCVENDLPNYYISTYDTEGVIETHCEKCSISCKTCSSAGRNVVQNKCVCKHVEYQPNPSERICMDQCPVNSFMVPDTNNTVCKKCHHECDQNYHCANGQSTGCQKCKNFTVFKGDIAQCVSECPKNLPFSNPANGECLDYDIASRQRKTRMVIIGSVLFGFAVMFLFILLVYWRCQRIGKKLKIAEMVDMPELTPIDASVRPNMSRICLIPSSELQTKLDKKLGAGAFGTVFAGIYYPKRAKNVKIPVAIKVFQTDQSQTDEMLEEATNMFRLRHDNLLKIIGFCMHDDGLKIVTIYRPLGNLQNFLKLHKENLGAREQVLYCYQIASGMQYLEKQRVVHRDLATRNVLVKKFNHVEITDFGLSKILKHDADSITIKSGKVAIKWLAIEIFSKHCYTHASDVWAFGVTCWEIITFGQSPYQGMSTDSIHNFLKDGNRLSQPPNCSQDLYQELLRCWMADPKSRPGFEILYERFKEFCKVPQLFLENSNKISESDLSAEERFQTERIREMFDGNIDPQMYFDQGSLPSMPSSPTSMATFTIPHGDLMNRMQSVNSSRYKTEPFDYGSTAQEDNSYLIPKTKEVQQSAVLYTAVTNEDGQTELSPSNGDYYNQPNTPSSSSGYYNEPHLKTKKPETSEEAEAVQYENEEVSQKETCL.

A signal peptide spans 1 to 20; it reads MRYPPSIGSILLIIPIFLTF. The Extracellular segment spans residues 21 to 818; that stretch reads FGNSNAQLWK…DIASRQRKTR (798 aa). Residues Asn91 and Asn169 are each glycosylated (N-linked (GlcNAc...) asparagine). 11 disulfide bridges follow: Cys220-Cys228, Cys224-Cys236, Cys244-Cys251, Cys248-Cys262, Cys263-Cys271, Cys267-Cys279, Cys282-Cys291, Cys295-Cys322, Cys326-Cys337, Cys341-Cys356, and Cys359-Cys364. Asn255 carries an N-linked (GlcNAc...) asparagine glycan. Asn376 is a glycosylation site (N-linked (GlcNAc...) asparagine). Intrachain disulfides connect Cys520–Cys529, Cys524–Cys537, Cys540–Cys549, Cys553–Cys567, Cys570–Cys577, Cys574–Cys585, Cys588–Cys604, Cys608–Cys620, Cys623–Cys632, Cys627–Cys644, Cys647–Cys660, Cys670–Cys693, Cys696–Cys703, Cys700–Cys715, Cys717–Cys731, Cys735–Cys750, Cys753–Cys763, Cys757–Cys771, Cys774–Cys787, and Cys791–Cys805. Asn561 carries an N-linked (GlcNAc...) asparagine glycan. Residue Asn655 is glycosylated (N-linked (GlcNAc...) asparagine). Residue Asn746 is glycosylated (N-linked (GlcNAc...) asparagine). An N-linked (GlcNAc...) asparagine glycan is attached at Asn776. Residues 819-839 traverse the membrane as a helical segment; that stretch reads MVIIGSVLFGFAVMFLFILLV. Residues 840-1323 are Cytoplasmic-facing; the sequence is YWRCQRIGKK…EEVSQKETCL (484 aa). The region spanning 885–1152 is the Protein kinase domain; that stretch reads TKLDKKLGAG…EFCKVPQLFL (268 aa). ATP-binding positions include 891-899 and Lys919; that span reads LGAGAFGTV. The active-site Proton acceptor is Asp1010. Residues 1265-1289 are compositionally biased toward polar residues; sequence GQTELSPSNGDYYNQPNTPSSSSGY. The interval 1265–1323 is disordered; the sequence is GQTELSPSNGDYYNQPNTPSSSSGYYNEPHLKTKKPETSEEAEAVQYENEEVSQKETCL. Positions 1293–1302 are enriched in basic and acidic residues; that stretch reads PHLKTKKPET. Over residues 1303-1315 the composition is skewed to acidic residues; that stretch reads SEEAEAVQYENEE.

This sequence belongs to the protein kinase superfamily. Tyr protein kinase family. EGF receptor subfamily. As to expression, expressed in vulval precursor cells (at protein level). Expressed in ALA neurons, 2 ventral head neurons, a single neuron in the tail, pharyngeal-intestinal valve and posterior arcade epithelial cells.

The protein localises to the apical cell membrane. It localises to the basolateral cell membrane. It catalyses the reaction L-tyrosyl-[protein] + ATP = O-phospho-L-tyrosyl-[protein] + ADP + H(+). Its function is as follows. Tyrosine-protein kinase receptor which, upon binding ligand lin-3, activates 2 signaling cascades: the let-60/Ras and MAP kinase signaling pathway and the let-60-independent phospholipase C-mediated Ca(2+) signaling pathway. Each pathway regulates distinct functions. By activating let-60/Ras, regulates larval development, induction of vulva cell precursors during vulva development, male spicule formation and posterior development of the epidermis. Probably by activating phospholipase plc-3 and inositol 1,4,5-trisphosphate receptor itr-1 signaling cascade downstream of ligand lin-3, plays a role in ovulation by promoting ovulatory gonadal sheath cell contractions. Probably by regulating neuronal transmission in ALA neurons, mediates, independently of let-60/Ras, the decrease in pharyngeal pumping and locomotion during the quiescent state that precedes each larval molt, downstream of lin-3 and upstream of plc-3. This is Receptor tyrosine-protein kinase let-23 from Caenorhabditis elegans.